The primary structure comprises 260 residues: Alpha-acetolactate decarboxylase (260 aa).

The protein belongs to the alpha-acetolactate decarboxylase family.

The catalysed reaction is (2S)-2-acetolactate + H(+) = (R)-acetoin + CO2. It participates in polyol metabolism; (R,R)-butane-2,3-diol biosynthesis; (R,R)-butane-2,3-diol from pyruvate: step 2/3. In terms of biological role, converts acetolactate into acetoin, which can be excreted by the cells. This may be a mechanism for controlling the internal pH of cells in the stationary stage. The chain is Alpha-acetolactate decarboxylase (budA) from Klebsiella aerogenes (Enterobacter aerogenes).